The following is a 380-amino-acid chain: 3-dehydroquinate synthase (380 aa).

NAD(+) is bound by residues 118–122 (GVIGD), 142–143 (TS), Lys-155, and Lys-164. Residues Glu-197, His-259, and His-278 each contribute to the Zn(2+) site.

The protein belongs to the sugar phosphate cyclases superfamily. Dehydroquinate synthase family. Co(2+) is required as a cofactor. Requires Zn(2+) as cofactor. It depends on NAD(+) as a cofactor.

It is found in the cytoplasm. It catalyses the reaction 7-phospho-2-dehydro-3-deoxy-D-arabino-heptonate = 3-dehydroquinate + phosphate. Its pathway is metabolic intermediate biosynthesis; chorismate biosynthesis; chorismate from D-erythrose 4-phosphate and phosphoenolpyruvate: step 2/7. Catalyzes the conversion of 3-deoxy-D-arabino-heptulosonate 7-phosphate (DAHP) to dehydroquinate (DHQ). This chain is 3-dehydroquinate synthase, found in Sinorhizobium medicae (strain WSM419) (Ensifer medicae).